The primary structure comprises 303 residues: Acetylglutamate kinase (303 aa).

Residues 69–70 (GG), R91, and N201 contribute to the substrate site.

Belongs to the acetylglutamate kinase family. ArgB subfamily.

Its subcellular location is the cytoplasm. It catalyses the reaction N-acetyl-L-glutamate + ATP = N-acetyl-L-glutamyl 5-phosphate + ADP. Its pathway is amino-acid biosynthesis; L-arginine biosynthesis; N(2)-acetyl-L-ornithine from L-glutamate: step 2/4. Functionally, catalyzes the ATP-dependent phosphorylation of N-acetyl-L-glutamate. In Novosphingobium aromaticivorans (strain ATCC 700278 / DSM 12444 / CCUG 56034 / CIP 105152 / NBRC 16084 / F199), this protein is Acetylglutamate kinase.